The following is a 283-amino-acid chain: Thymidylate synthase (283 aa).

R22 provides a ligand contact to dUMP. C160 functions as the Nucleophile in the catalytic mechanism. DUMP-binding positions include R180 to D183, N191, and H221 to Y223. D183 is a (6R)-5,10-methylene-5,6,7,8-tetrahydrofolate binding site. A (6R)-5,10-methylene-5,6,7,8-tetrahydrofolate-binding site is contributed by A282.

It belongs to the thymidylate synthase family. Bacterial-type ThyA subfamily. In terms of assembly, homodimer.

It is found in the cytoplasm. It carries out the reaction dUMP + (6R)-5,10-methylene-5,6,7,8-tetrahydrofolate = 7,8-dihydrofolate + dTMP. It functions in the pathway pyrimidine metabolism; dTTP biosynthesis. Its function is as follows. Catalyzes the reductive methylation of 2'-deoxyuridine-5'-monophosphate (dUMP) to 2'-deoxythymidine-5'-monophosphate (dTMP) while utilizing 5,10-methylenetetrahydrofolate (mTHF) as the methyl donor and reductant in the reaction, yielding dihydrofolate (DHF) as a by-product. This enzymatic reaction provides an intracellular de novo source of dTMP, an essential precursor for DNA biosynthesis. In Colwellia psychrerythraea (strain 34H / ATCC BAA-681) (Vibrio psychroerythus), this protein is Thymidylate synthase.